A 554-amino-acid polypeptide reads, in one-letter code: MDSDQTPLINPSLFEECAQNHFAATDPRSRRPFHIEPSYITSINDDDPQRITSVASAMNKRIHYYSKLSNPSDKGLIAPDHVLPAPEEIYVYSPLGTALKIDGSDGTGKNSSIVTIFMIWNTMMGTSILSIPWGIKQAGFTTGVCILFLMGILTLYCCYRVVKSRGTIPLTDTSNWEFPDVCQYYFGSFGRWSSLLFSLVSLIGAMIVYWVLMSNFLFNTGKFIYNYVNDVNVTDDVLSNNGSDKVICPNPDSTRPLNKSMDTYFGNGTNYEQFETWWSKTNTVPFYLVVLLLPLLSFRSPSFFAKFNILGTVSIIYLVSLVTLKAAHLGFHLRFSWNQVQEFFVPEFRLSFPQLTGILTLAFFIHNCIITLLKNNRNQKNNVRDLSIAYLLVGLTYIYVGVAVFASFPSPPLSKQCIQQNFLDNFPSSDILAFVARIFLLFQMMTVYPLLGYLVRVQLLGHIFGDIYPSVFHVLALNIAVVGVGVIMARFYPNIGGIIRFSGAACGLAFVFVYPSLIHMISLHRRGQLKVHSILIHVSIIVLGIANLIAQFFM.

Residues 1 to 112 (MDSDQTPLIN…GSDGTGKNSS (112 aa)) are Cytoplasmic-facing. Residues 113 to 133 (IVTIFMIWNTMMGTSILSIPW) form a helical membrane-spanning segment. An important for arginine binding and amino acid transport region spans residues 122–127 (TMMGTS). Ser-127 contacts arginine. Topologically, residues 134 to 139 (GIKQAG) are lumenal. The chain crosses the membrane as a helical span at residues 140 to 160 (FTTGVCILFLMGILTLYCCYR). Topologically, residues 161–191 (VVKSRGTIPLTDTSNWEFPDVCQYYFGSFGR) are cytoplasmic. A helical transmembrane segment spans residues 192 to 218 (WSSLLFSLVSLIGAMIVYWVLMSNFLF). The Lumenal segment spans residues 219–276 (NTGKFIYNYVNDVNVTDDVLSNNGSDKVICPNPDSTRPLNKSMDTYFGNGTNYEQFET). N-linked (GlcNAc...) asparagine glycosylation is found at Asn-232, Asn-241, Asn-258, and Asn-267. Cys-248 and Cys-417 are oxidised to a cystine. Residues 277–293 (WWSKTNTVPFYLVVLLL) form a helical membrane-spanning segment. Residues 294–302 (PLLSFRSPS) are Cytoplasmic-facing. Residues 303–327 (FFAKFNILGTVSIIYLVSLVTLKAA) traverse the membrane as a helical segment. The Lumenal segment spans residues 328-349 (HLGFHLRFSWNQVQEFFVPEFR). The chain crosses the membrane as a helical span at residues 350–370 (LSFPQLTGILTLAFFIHNCII). The Cytoplasmic segment spans residues 371-387 (TLLKNNRNQKNNVRDLS). The helical transmembrane segment at 388–408 (IAYLLVGLTYIYVGVAVFASF) threads the bilayer. Residues 409 to 430 (PSPPLSKQCIQQNFLDNFPSSD) lie on the Lumenal side of the membrane. A helical transmembrane segment spans residues 431 to 451 (ILAFVARIFLLFQMMTVYPLL). The CARC motif motif lies at 437–447 (RIFLLFQMMTV). The CRAC motif signature appears at 450–456 (LLGYLVR). Residues 452 to 472 (GYLVRVQLLGHIFGDIYPSVF) lie on the Cytoplasmic side of the membrane. Residues 473–493 (HVLALNIAVVGVGVIMARFYP) form a helical membrane-spanning segment. At 494-500 (NIGGIIR) the chain is on the lumenal side. The helical transmembrane segment at 501–521 (FSGAACGLAFVFVYPSLIHMI) threads the bilayer. The Cytoplasmic segment spans residues 522 to 533 (SLHRRGQLKVHS). Residues 534–554 (ILIHVSIIVLGIANLIAQFFM) traverse the membrane as a helical segment.

It belongs to the amino acid/polyamine transporter 2 family. SLC38A9 subfamily. As to quaternary structure, associated component of the Ragulator complex. Associated component of the Rag GTPases heterodimers. In terms of processing, glycosylated.

It localises to the lysosome membrane. The protein resides in the late endosome membrane. It carries out the reaction L-leucine(in) = L-leucine(out). The catalysed reaction is L-tyrosine(in) = L-tyrosine(out). It catalyses the reaction L-glutamine(out) = L-glutamine(in). The enzyme catalyses L-asparagine(out) = L-asparagine(in). Lysosomal amino acid transporter involved in the activation of mTORC1 in response to amino acid levels. Probably acts as an amino acid sensor of the Rag GTPases and Ragulator complexes, 2 complexes involved in amino acid sensing and activation of mTORC1, a signaling complex promoting cell growth in response to growth factors, energy levels, and amino acids. Following activation by amino acids, the Ragulator and Rag GTPases function as a scaffold recruiting mTORC1 to lysosomes where it is in turn activated. SLC38A9 mediates transport of amino acids with low capacity and specificity with a slight preference for polar amino acids. Acts as an arginine sensor. Following activation by arginine binding, mediates transport of L-glutamine, leucine and tyrosine with high efficiency, and is required for the efficient utilization of these amino acids after lysosomal protein degradation. However, the transport mechanism is not well defined and the role of sodium is not clear. Guanine exchange factor (GEF) that, upon arginine binding, stimulates GDP release from RRAGA and therefore activates the Rag GTPase heterodimer and the mTORC1 pathway in response to nutrient sufficiency. The chain is Neutral amino acid transporter 9 from Xenopus tropicalis (Western clawed frog).